The chain runs to 129 residues: MRSSSPSQPPSIKKAHRQAKRRAIRRRRIDLQCGCSIYFHIDCTGHGFTHRGIHHCTSGGEWRVYLGDSKSPVFQDIQSRGPAIHQNEDIPCTNTVQPQPEESVASPQSLPELPSLDDFDDSFWVNLFK.

Over residues 1–12 (MRSSSPSQPPSI) the composition is skewed to low complexity. A disordered region spans residues 1 to 21 (MRSSSPSQPPSIKKAHRQAKR). A Nuclear localization signal motif is present at residues 13–28 (KKAHRQAKRRAIRRRR). A zinc finger lies at 33-50 (CGCSIYFHIDCTGHGFTH). Residues 84–114 (IHQNEDIPCTNTVQPQPEESVASPQSLPELP) form a disordered region. The span at 92 to 109 (CTNTVQPQPEESVASPQS) shows a compositional bias: polar residues. Positions 115 to 129 (SLDDFDDSFWVNLFK) are transactivation.

It belongs to the geminiviridae transcriptional activator protein family. As to quaternary structure, monomer. Homodimer. Homooligomer. Self-interaction correlates with nuclear localization and efficient activation of transcription. Monomers suppress local silencing by interacting with and inactivating host adenosine kinase 2 (ADK2) in the cytoplasm. Interacts with and inhibits host SNF1 kinase. Binds to ssDNA. Post-translationally, phosphorylated.

The protein localises to the host nucleus. Its subcellular location is the host cytoplasm. In terms of biological role, strong activator of the late viral genes promoters. Enhances the expression of the capsid protein and nuclear shuttle protein. Acts as a suppressor of RNA-mediated gene silencing, also known as post-transcriptional gene silencing (PTGS), a mechanism of plant viral defense that limits the accumulation of viral RNAs. Suppresses the host RNA silencing by inhibiting adenosine kinase 2 (ADK2), a kinase involved in a general methylation pathway. Also suppresses the host basal defense by interacting with and inhibiting SNF1 kinase, a key regulator of cell metabolism implicated in innate antiviral defense. Determines pathogenicity. The chain is Transcriptional activator protein from Abutilon (Upland cotton).